A 279-amino-acid chain; its full sequence is Large ribosomal subunit protein uL2 (279 aa).

2 disordered regions span residues serine 32 to histidine 53 and alanine 225 to lysine 279. The segment covering lysine 253 to isoleucine 268 has biased composition (basic and acidic residues). The span at valine 269–lysine 279 shows a compositional bias: basic residues.

It belongs to the universal ribosomal protein uL2 family. Part of the 50S ribosomal subunit. Forms a bridge to the 30S subunit in the 70S ribosome.

In terms of biological role, one of the primary rRNA binding proteins. Required for association of the 30S and 50S subunits to form the 70S ribosome, for tRNA binding and peptide bond formation. It has been suggested to have peptidyltransferase activity; this is somewhat controversial. Makes several contacts with the 16S rRNA in the 70S ribosome. This is Large ribosomal subunit protein uL2 from Clavibacter michiganensis subsp. michiganensis (strain NCPPB 382).